Reading from the N-terminus, the 836-residue chain is CUB domain-containing protein 1 (836 aa).

An N-terminal signal peptide occupies residues 1-29 (MAGLNCGVSIALLGVLLLGAARLPRGAEA). Residues 30–667 (FEIALPRESN…TLTPRTVDLT (638 aa)) lie on the Extracellular side of the membrane. 7 N-linked (GlcNAc...) asparagine glycosylation sites follow: N39, N122, N180, N205, N270, N310, and N386. The CUB domain occupies 417 to 544 (CTDHRYCQRK…VSFIPYFKEE (128 aa)). A disulfide bridge connects residues C476 and C499. A helical membrane pass occupies residues 668-688 (VILIAAVGGGVLLLSALGLII). Topologically, residues 689–836 (CCVKKKKKKT…NTQEPMEPAE (148 aa)) are cytoplasmic. Y734 carries the phosphotyrosine modification. Residues 776 to 836 (PPTICSRAPT…NTQEPMEPAE (61 aa)) form a disordered region.

In terms of assembly, interacts with CDH2/N-cadherin, CDH3/P-cadherin, SDC1/syndecan-1, SDC4/syndecan-4 and the serine protease ST14/MT-SP1. Also interacts with SRC and PRKCG/protein kinase C gamma. Post-translationally, phosphorylated on tyrosine by kinases of the SRC family such as SRC and YES as well as by the protein kinase C gamma/PRKCG. Dephosphorylated by phosphotyrosine phosphatases. Also phosphorylated by suramin, a heparin analog. Tyrosine phosphorylated in response to dissociation of integrin alpha-6 beta-4 from laminin-5. In terms of processing, N-glycosylated. A soluble form may also be produced by proteolytic cleavage at the cell surface (shedding). Another peptide of 80 kDa (p80) is present in cultured keratinocytes probably due to tryptic cleavage at an unidentified site on its N-terminal side. Converted to p80 by plasmin, a trypsin-like protease. As to expression, highly expressed in mitotic cells with low expression during interphase. Detected at highest levels in skeletal muscle and colon with lower levels in kidney, small intestine, placenta and lung. Up-regulated in a number of human tumor cell lines, as well as in colorectal cancer, breast carcinoma and lung cancer. Also expressed in cells with phenotypes reminiscent of mesenchymal stem cells and neural stem cells.

It is found in the cell membrane. The protein localises to the secreted. In terms of biological role, may be involved in cell adhesion and cell matrix association. May play a role in the regulation of anchorage versus migration or proliferation versus differentiation via its phosphorylation. May be a novel marker for leukemia diagnosis and for immature hematopoietic stem cell subsets. Belongs to the tetraspanin web involved in tumor progression and metastasis. The polypeptide is CUB domain-containing protein 1 (CDCP1) (Homo sapiens (Human)).